Here is a 216-residue protein sequence, read N- to C-terminus: Maintenance of carboxysome distribution protein A (216 aa).

The ATP site is built by G18, G19, G21, K22, T23, T24, and Q47. T23 serves as a coordination point for Mg(2+).

It belongs to the ParA family. McdA subfamily. Homodimerizes in the presence of ATP. Each subunit binds 1 ATP molecule; some residues cross the dimer interface to contact ATP in the other subunit. Forms a complex with McdB.

The protein resides in the cytoplasm. It is found in the nucleoid. It carries out the reaction ATP + H2O = ADP + phosphate + H(+). Its function is as follows. McdA and McdB together mediate carboxysome (Cb) spacing, size, ultrastructure and probably inheritance in the cell, together they prevent Cb aggregation. McdA is an ATPase that forms dynamic gradients on the nucleoid in response to adapter protein McdB, which associates with carboxysomes. The interplay between McdA gradients on the nucleoid and McdB-bound carboxysomes result in the equal spacing of Cbs along the cell length. In terms of biological role, incorrect positioning (aggregation) of carboxysomes results in reduced CO(2) fixation by encapsulated ribulose-1,5-bisphosphate carboxylase (RuBisCO, cbbL/cbbS), which leads to slower growth. This chain is Maintenance of carboxysome distribution protein A, found in Gloeobacter kilaueensis (strain ATCC BAA-2537 / CCAP 1431/1 / ULC 316 / JS1).